A 441-amino-acid chain; its full sequence is GTPase Der (441 aa).

2 EngA-type G domains span residues 4–169 (PVVA…PEDI) and 178–353 (IKVA…DQAA). GTP is bound by residues 10-17 (GRPNVGKS), 57-61 (DTGGI), 120-123 (NKVD), 184-191 (GKPNAGKS), 231-235 (DTAGI), and 296-299 (NKWD). The 85-residue stretch at 354-438 (FRISTGMLND…PIRFIHRQRE (85 aa)) folds into the KH-like domain.

The protein belongs to the TRAFAC class TrmE-Era-EngA-EngB-Septin-like GTPase superfamily. EngA (Der) GTPase family. As to quaternary structure, associates with the 50S ribosomal subunit.

Functionally, GTPase that plays an essential role in the late steps of ribosome biogenesis. The protein is GTPase Der of Ruminiclostridium cellulolyticum (strain ATCC 35319 / DSM 5812 / JCM 6584 / H10) (Clostridium cellulolyticum).